The primary structure comprises 134 residues: MRLYKAMALCLPLVVICTSEVSQSTAETMKSKAQDSYKRVVEHGKTCLERMCGLLSRGKGMLYTRVKNIVSSIRRGGEKNEEVAGPVDGEGSEEEAFDLSPEDIEKLIEEIKKKLAGYMDVTGEQNEEEEKKEL.

Positions 1-26 (MRLYKAMALCLPLVVICTSEVSQSTA) are cleaved as a signal peptide. Positions 77 to 98 (GEKNEEVAGPVDGEGSEEEAFD) are disordered.

This is an uncharacterized protein from Encephalitozoon cuniculi (strain GB-M1) (Microsporidian parasite).